A 169-amino-acid polypeptide reads, in one-letter code: Photosystem I assembly protein Ycf3 (169 aa).

TPR repeat units lie at residues 35–68, 72–105, and 120–153; these read AFTY…EIDP, SYIL…NPSL, and GEQA…APNN.

This sequence belongs to the Ycf3 family.

Its subcellular location is the plastid. It is found in the chloroplast thylakoid membrane. Its function is as follows. Essential for the assembly of the photosystem I (PSI) complex. May act as a chaperone-like factor to guide the assembly of the PSI subunits. This chain is Photosystem I assembly protein Ycf3, found in Staurastrum punctulatum (Green alga).